A 352-amino-acid polypeptide reads, in one-letter code: Nicotinate-nucleotide--dimethylbenzimidazole phosphoribosyltransferase (352 aa).

E316 functions as the Proton acceptor in the catalytic mechanism.

The protein belongs to the CobT family.

The enzyme catalyses 5,6-dimethylbenzimidazole + nicotinate beta-D-ribonucleotide = alpha-ribazole 5'-phosphate + nicotinate + H(+). It participates in nucleoside biosynthesis; alpha-ribazole biosynthesis; alpha-ribazole from 5,6-dimethylbenzimidazole: step 1/2. Its function is as follows. Catalyzes the synthesis of alpha-ribazole-5'-phosphate from nicotinate mononucleotide (NAMN) and 5,6-dimethylbenzimidazole (DMB). The protein is Nicotinate-nucleotide--dimethylbenzimidazole phosphoribosyltransferase of Yersinia enterocolitica serotype O:8 / biotype 1B (strain NCTC 13174 / 8081).